The chain runs to 899 residues: Bifunctional uridylyltransferase/uridylyl-removing enzyme (899 aa).

The segment at 1-342 (MPQVDPDLFD…PGDAAGRVEP (342 aa)) is uridylyltransferase. The segment at 343–705 (LNERFQVRDG…TTQREFEGAT (363 aa)) is uridylyl-removing. One can recognise an HD domain in the interval 461–583 (VDAHTLNLIK…VRDQTYLDYL (123 aa)). 2 consecutive ACT domains span residues 706–789 (QIFI…IIQR) and 816–899 (ILEI…RISI).

The protein belongs to the GlnD family. It depends on Mg(2+) as a cofactor.

It carries out the reaction [protein-PII]-L-tyrosine + UTP = [protein-PII]-uridylyl-L-tyrosine + diphosphate. The enzyme catalyses [protein-PII]-uridylyl-L-tyrosine + H2O = [protein-PII]-L-tyrosine + UMP + H(+). With respect to regulation, uridylyltransferase (UTase) activity is inhibited by glutamine, while glutamine activates uridylyl-removing (UR) activity. Its function is as follows. Modifies, by uridylylation and deuridylylation, the PII regulatory proteins (GlnB and homologs), in response to the nitrogen status of the cell that GlnD senses through the glutamine level. Under low glutamine levels, catalyzes the conversion of the PII proteins and UTP to PII-UMP and PPi, while under higher glutamine levels, GlnD hydrolyzes PII-UMP to PII and UMP (deuridylylation). Thus, controls uridylylation state and activity of the PII proteins, and plays an important role in the regulation of nitrogen fixation and metabolism. The chain is Bifunctional uridylyltransferase/uridylyl-removing enzyme from Azotobacter vinelandii (strain DJ / ATCC BAA-1303).